The following is a 193-amino-acid chain: Non-canonical purine NTP pyrophosphatase homolog (193 aa).

It belongs to the HAM1 NTPase family.

This is Non-canonical purine NTP pyrophosphatase homolog from Halalkalibacterium halodurans (strain ATCC BAA-125 / DSM 18197 / FERM 7344 / JCM 9153 / C-125) (Bacillus halodurans).